The sequence spans 35 residues: Photosystem II reaction center protein M (35 aa).

Residues 5–25 form a helical membrane-spanning segment; it reads ILAFIATALFIIIPTAFLLIL.

The protein belongs to the PsbM family. PSII is composed of 1 copy each of membrane proteins PsbA, PsbB, PsbC, PsbD, PsbE, PsbF, PsbH, PsbI, PsbJ, PsbK, PsbL, PsbM, PsbT, PsbX, PsbY, PsbZ, Psb30/Ycf12, at least 3 peripheral proteins of the oxygen-evolving complex and a large number of cofactors. It forms dimeric complexes.

Its subcellular location is the plastid. The protein localises to the chloroplast thylakoid membrane. Its function is as follows. One of the components of the core complex of photosystem II (PSII). PSII is a light-driven water:plastoquinone oxidoreductase that uses light energy to abstract electrons from H(2)O, generating O(2) and a proton gradient subsequently used for ATP formation. It consists of a core antenna complex that captures photons, and an electron transfer chain that converts photonic excitation into a charge separation. This subunit is found at the monomer-monomer interface. The chain is Photosystem II reaction center protein M from Chara vulgaris (Common stonewort).